Consider the following 156-residue polypeptide: Protein-export protein SecB (156 aa).

Belongs to the SecB family. In terms of assembly, homotetramer, a dimer of dimers. One homotetramer interacts with 1 SecA dimer.

It localises to the cytoplasm. One of the proteins required for the normal export of preproteins out of the cell cytoplasm. It is a molecular chaperone that binds to a subset of precursor proteins, maintaining them in a translocation-competent state. It also specifically binds to its receptor SecA. This is Protein-export protein SecB from Aliivibrio fischeri (strain ATCC 700601 / ES114) (Vibrio fischeri).